A 317-amino-acid polypeptide reads, in one-letter code: Aspartate carbamoyltransferase catalytic subunit (317 aa).

Positions 66 and 67 each coordinate carbamoyl phosphate. Lys-94 contributes to the L-aspartate binding site. Arg-116, His-144, and Gln-147 together coordinate carbamoyl phosphate. Residues Arg-177 and Arg-231 each contribute to the L-aspartate site. Carbamoyl phosphate contacts are provided by Gly-272 and Pro-273.

This sequence belongs to the aspartate/ornithine carbamoyltransferase superfamily. ATCase family. In terms of assembly, heterododecamer (2C3:3R2) of six catalytic PyrB chains organized as two trimers (C3), and six regulatory PyrI chains organized as three dimers (R2).

It carries out the reaction carbamoyl phosphate + L-aspartate = N-carbamoyl-L-aspartate + phosphate + H(+). It participates in pyrimidine metabolism; UMP biosynthesis via de novo pathway; (S)-dihydroorotate from bicarbonate: step 2/3. In terms of biological role, catalyzes the condensation of carbamoyl phosphate and aspartate to form carbamoyl aspartate and inorganic phosphate, the committed step in the de novo pyrimidine nucleotide biosynthesis pathway. The chain is Aspartate carbamoyltransferase catalytic subunit from Nitrobacter hamburgensis (strain DSM 10229 / NCIMB 13809 / X14).